The sequence spans 973 residues: NLR family member X1 (973 aa).

Residues 1–84 (MRWGCHLPRT…EAIQRHRRNL (84 aa)) constitute a mitochondrion transit peptide. A required for interaction with MAVS region spans residues 73–554 (ATEAIQRHRR…RILPLLFNLL (482 aa)). Residues 158–481 (QTVVLYGTVG…LRFFLAPCVE (324 aa)) form the NACHT domain. 164–171 (GTVGTGKS) serves as a coordination point for ATP. The segment at 554 to 972 (LKVVPRVFGR…TLLEQLGGSG (419 aa)) is required for the repression of MAVS-induced interferon signaling. Residues 665-692 (RQVLPPSELLDHLFFHYEFQNQRFSAEV) form the LRRNT domain. LRR repeat units follow at residues 693–716 (LGSLRQLNLAGVRMTPLKCTVVAS), 722–745 (RHPLDEVNLASCQLDPAGLHTLMP), 747–775 (LLRARKLGLQLNNLGPEACRDLRDLLLHD), 776–799 (QCQITTLRLSNNPLTAAGVGVLMD), 809–832 (HLSLLHTDLGDEGLELLAAQLDRN), 833–855 (KQLQELNVAYNGAGDTVALALAK), 856–875 (AARKHPSLELLHLYFNELSS), and 876–897 (EGRQVLRDLGGSGEGGARVVAS). The 65-residue stretch at 904-968 (VSEYWSVILS…SEVKTLLEQL (65 aa)) folds into the LRRCT domain.

The protein belongs to the NLRP family. As to quaternary structure, homohexamer. Interacts with MAVS. Interacts with TUFM.

The protein resides in the mitochondrion outer membrane. Functionally, participates in antiviral signaling. Acts as a negative regulator of MAVS-mediated antiviral responses, through the inhibition of the virus-induced RLH (RIG-like helicase)-MAVS interaction. Instead, promotes autophagy by interacting with TUFM and subsequently recruiting the autophagy-related proteins ATG5 and ATG12. Also regulates MAVS-dependent NLRP3 inflammasome activation to attenuate apoptosis. Has no inhibitory function on NF-kappa-B signaling pathway, but enhances NF-kappa-B and JUN N-terminal kinase dependent signaling through the production of reactive oxygen species. Regulates viral mediated-inflammation and energy metabolism in a sex-dependent manner. In females, prevents uncontrolled inflammation and energy metabolism and thus, may contribute to the sex differences observed in infectious and inflammatory diseases. This chain is NLR family member X1 (Nlrx1), found in Rattus norvegicus (Rat).